Consider the following 131-residue polypeptide: Fluoride-specific ion channel FluC 2 (131 aa).

4 helical membrane passes run 5-25 (SAVF…NLWI), 35-55 (WLEN…FMIG), 59-79 (PLLS…MSTF), and 95-115 (LLYV…GVFV). Na(+) contacts are provided by Gly-71 and Thr-74.

The protein belongs to the fluoride channel Fluc/FEX (TC 1.A.43) family.

It localises to the cell membrane. It catalyses the reaction fluoride(in) = fluoride(out). Its activity is regulated as follows. Na(+) is not transported, but it plays an essential structural role and its presence is essential for fluoride channel function. Fluoride-specific ion channel. Important for reducing fluoride concentration in the cell, thus reducing its toxicity. In Bacillus subtilis (strain 168), this protein is Fluoride-specific ion channel FluC 2.